We begin with the raw amino-acid sequence, 447 residues long: Serine/threonine-protein phosphatase 2A 55 kDa regulatory subunit B delta isoform (447 aa).

7 WD repeats span residues 26-65 (AEADIISTVEFNCSGELLATGDKGGRVVIFQREQENKSRP), 91-132 (EIEE…KRVE), 175-213 (AHTYHINSISVNSDHQTYLSADDLRVNLWHLEITDRSFN), 224-264 (ELTE…LCDR), 283-321 (EIISSISDVKFSHSGRYMMTRDYLSVKVWDLNMESRPVE), 338-379 (ENDC…DITL), and 414-447 (DFNKKILHTAWHPTDNIIAVAATNNLYIFQDKVN).

This sequence belongs to the phosphatase 2A regulatory subunit B family. PP2A consists of a common heterodimeric core enzyme, composed of a 36 kDa catalytic subunit (subunit C) and a 65 kDa constant regulatory subunit (PR65 or subunit A), that associates with a variety of regulatory subunits. Proteins that associate with the core dimer include three families of regulatory subunits B (the R2/B/PR55/B55, R3/B''/PR72/PR130/PR59 and R5/B'/B56 families), the 48 kDa variable regulatory subunit, viral proteins, and cell signaling molecules. Interacts with ensa (when phosphorylated at 'Ser-67') and arpp19 (when phosphorylated at 'Ser-67'), leading to inhibit PP2A activity.

The protein localises to the cytoplasm. Its function is as follows. Substrate-recognition subunit of protein phosphatase 2A (PP2A) that plays a key role in cell cycle by controlling mitosis entry and exit. The activity of PP2A complexes containing ppp2r2d (PR55-delta) fluctuate during the cell cycle: the activity is high in interphase and low in mitosis. During mitosis, activity of PP2A is inhibited via interaction with phosphorylated ensa and arpp19 inhibitors. PP2A complexes containing ppp2r2d (PR55-delta) also regulate the activity of TGF-beta/Activin/Nodal signaling by restricting receptor activity. Within the PP2A complexes, the B regulatory subunits modulate substrate selectivity and catalytic activity, and may also direct the localization of the catalytic enzyme to a particular subcellular compartment. This is Serine/threonine-protein phosphatase 2A 55 kDa regulatory subunit B delta isoform (ppp2r2d) from Xenopus laevis (African clawed frog).